Consider the following 43-residue polypeptide: uncharacterized protein (43 aa).

Residues 1-22 (MKRKIIAIGIFFRLFIIHIHFS) form the signal peptide.

This is an uncharacterized protein from Schizosaccharomyces pombe (strain 972 / ATCC 24843) (Fission yeast).